The primary structure comprises 488 residues: Palmitoleoyl-protein carboxylesterase notum1' (488 aa).

The signal sequence occupies residues 1-19 (MAGTLCVTLLLLLSTIAVG). Asparagine 90 carries an N-linked (GlcNAc...) asparagine glycan. Active-site charge relay system residues include serine 226, aspartate 334, and histidine 383.

This sequence belongs to the pectinacetylesterase family. Notum subfamily. Expressed in the egg and through cleavage to gastrulation stages. Enriched in the animal (prospective ectoderm) and dorsal regions in early gastrula. Shows a dynamic expression during embryogenesis, in particular during neural induction and antero-posterior (AP) patterning.

Its subcellular location is the secreted. It catalyses the reaction [Wnt protein]-O-(9Z)-hexadecenoyl-L-serine + H2O = [Wnt protein]-L-serine + (9Z)-hexadecenoate + H(+). Functionally, carboxylesterase that acts as a key negative regulator of the Wnt signaling pathway by specifically mediating depalmitoleoylation of WNT proteins. Serine palmitoleoylation of WNT proteins is required for efficient binding to frizzled receptors. Functions in the prospective ectoderm and is required for neural induction. This chain is Palmitoleoyl-protein carboxylesterase notum1', found in Xenopus laevis (African clawed frog).